Here is a 202-residue protein sequence, read N- to C-terminus: P25 protein (202 aa).

Residues 7–195 form the Flavodoxin-like domain; sequence VAIVIYSTYG…EIARIQGETF (189 aa). Ser181 is modified (phosphoserine).

It belongs to the WrbA family. In terms of assembly, homodimer.

Unknown. Target of pap1 transcription factor. Confers brefeldin A resistance in S.pombe. The polypeptide is P25 protein (obr1) (Schizosaccharomyces pombe (strain 972 / ATCC 24843) (Fission yeast)).